A 299-amino-acid polypeptide reads, in one-letter code: Ribosomal RNA small subunit methyltransferase A (299 aa).

S-adenosyl-L-methionine is bound by residues asparagine 44, valine 46, glycine 71, glutamate 92, aspartate 122, and asparagine 141.

It belongs to the class I-like SAM-binding methyltransferase superfamily. rRNA adenine N(6)-methyltransferase family. RsmA subfamily.

It is found in the cytoplasm. The catalysed reaction is adenosine(1518)/adenosine(1519) in 16S rRNA + 4 S-adenosyl-L-methionine = N(6)-dimethyladenosine(1518)/N(6)-dimethyladenosine(1519) in 16S rRNA + 4 S-adenosyl-L-homocysteine + 4 H(+). Specifically dimethylates two adjacent adenosines (A1518 and A1519) in the loop of a conserved hairpin near the 3'-end of 16S rRNA in the 30S particle. May play a critical role in biogenesis of 30S subunits. The polypeptide is Ribosomal RNA small subunit methyltransferase A (Rhodococcus erythropolis (strain PR4 / NBRC 100887)).